A 141-amino-acid polypeptide reads, in one-letter code: Large ribosomal subunit protein uL11 (141 aa).

The protein belongs to the universal ribosomal protein uL11 family. In terms of assembly, part of the ribosomal stalk of the 50S ribosomal subunit. Interacts with L10 and the large rRNA to form the base of the stalk. L10 forms an elongated spine to which L12 dimers bind in a sequential fashion forming a multimeric L10(L12)X complex. One or more lysine residues are methylated.

In terms of biological role, forms part of the ribosomal stalk which helps the ribosome interact with GTP-bound translation factors. This is Large ribosomal subunit protein uL11 from Exiguobacterium sp. (strain ATCC BAA-1283 / AT1b).